The following is a 557-amino-acid chain: Dihydroxy-acid dehydratase (557 aa).

Residue C49 coordinates [2Fe-2S] cluster. Residue D81 participates in Mg(2+) binding. A [2Fe-2S] cluster-binding site is contributed by C122. Mg(2+)-binding residues include D123 and K124. K124 is modified (N6-carboxylysine). C194 serves as a coordination point for [2Fe-2S] cluster. E446 lines the Mg(2+) pocket. S472 (proton acceptor) is an active-site residue.

Belongs to the IlvD/Edd family. Homodimer. Requires [2Fe-2S] cluster as cofactor. The cofactor is Mg(2+).

It carries out the reaction (2R)-2,3-dihydroxy-3-methylbutanoate = 3-methyl-2-oxobutanoate + H2O. The enzyme catalyses (2R,3R)-2,3-dihydroxy-3-methylpentanoate = (S)-3-methyl-2-oxopentanoate + H2O. The protein operates within amino-acid biosynthesis; L-isoleucine biosynthesis; L-isoleucine from 2-oxobutanoate: step 3/4. Its pathway is amino-acid biosynthesis; L-valine biosynthesis; L-valine from pyruvate: step 3/4. Its function is as follows. Functions in the biosynthesis of branched-chain amino acids. Catalyzes the dehydration of (2R,3R)-2,3-dihydroxy-3-methylpentanoate (2,3-dihydroxy-3-methylvalerate) into 2-oxo-3-methylpentanoate (2-oxo-3-methylvalerate) and of (2R)-2,3-dihydroxy-3-methylbutanoate (2,3-dihydroxyisovalerate) into 2-oxo-3-methylbutanoate (2-oxoisovalerate), the penultimate precursor to L-isoleucine and L-valine, respectively. The protein is Dihydroxy-acid dehydratase of Prochlorococcus marinus (strain MIT 9312).